The chain runs to 248 residues: Probable phosphatase VFMJ11_A0091 (248 aa).

The Zn(2+) site is built by H8, H10, H16, H41, E74, H102, H132, D194, and H196.

The protein belongs to the PHP family. Requires Zn(2+) as cofactor.

The chain is Probable phosphatase VFMJ11_A0091 from Aliivibrio fischeri (strain MJ11) (Vibrio fischeri).